The sequence spans 502 residues: ATP synthase subunit alpha (502 aa).

169-176 serves as a coordination point for ATP; the sequence is GDRQTGKT.

The protein belongs to the ATPase alpha/beta chains family. F-type ATPases have 2 components, CF(1) - the catalytic core - and CF(0) - the membrane proton channel. CF(1) has five subunits: alpha(3), beta(3), gamma(1), delta(1), epsilon(1). CF(0) has three main subunits: a(1), b(2) and c(9-12). The alpha and beta chains form an alternating ring which encloses part of the gamma chain. CF(1) is attached to CF(0) by a central stalk formed by the gamma and epsilon chains, while a peripheral stalk is formed by the delta and b chains.

The protein localises to the cell membrane. The catalysed reaction is ATP + H2O + 4 H(+)(in) = ADP + phosphate + 5 H(+)(out). In terms of biological role, produces ATP from ADP in the presence of a proton gradient across the membrane. The alpha chain is a regulatory subunit. This chain is ATP synthase subunit alpha, found in Clostridium perfringens (strain SM101 / Type A).